Here is a 213-residue protein sequence, read N- to C-terminus: Imidazole glycerol phosphate synthase subunit HisH (213 aa).

One can recognise a Glutamine amidotransferase type-1 domain in the interval 4–211 (NIGLIDYGMG…LAWLKKETKD (208 aa)). The active-site Nucleophile is the C82. Active-site residues include H186 and E188.

As to quaternary structure, heterodimer of HisH and HisF.

The protein localises to the cytoplasm. It catalyses the reaction 5-[(5-phospho-1-deoxy-D-ribulos-1-ylimino)methylamino]-1-(5-phospho-beta-D-ribosyl)imidazole-4-carboxamide + L-glutamine = D-erythro-1-(imidazol-4-yl)glycerol 3-phosphate + 5-amino-1-(5-phospho-beta-D-ribosyl)imidazole-4-carboxamide + L-glutamate + H(+). It carries out the reaction L-glutamine + H2O = L-glutamate + NH4(+). It participates in amino-acid biosynthesis; L-histidine biosynthesis; L-histidine from 5-phospho-alpha-D-ribose 1-diphosphate: step 5/9. Its function is as follows. IGPS catalyzes the conversion of PRFAR and glutamine to IGP, AICAR and glutamate. The HisH subunit catalyzes the hydrolysis of glutamine to glutamate and ammonia as part of the synthesis of IGP and AICAR. The resulting ammonia molecule is channeled to the active site of HisF. The protein is Imidazole glycerol phosphate synthase subunit HisH of Prochlorococcus marinus (strain SARG / CCMP1375 / SS120).